Here is a 223-residue protein sequence, read N- to C-terminus: Proteasome subunit beta type-1 (223 aa).

Belongs to the peptidase T1B family. In terms of assembly, component of the 20S core complex of the 26S proteasome. The 26S proteasome is composed of a core protease (CP), known as the 20S proteasome, capped at one or both ends by the 19S regulatory particle (RP/PA700). The 20S proteasome core is composed of 28 subunits that are arranged in four stacked rings, resulting in a barrel-shaped structure. The two end rings are each formed by seven alpha subunits, and the two central rings are each formed by seven beta subunits. The catalytic chamber with the active sites is on the inside of the barrel. As to expression, present in all tissues examined. Slightly lower levels in roots.

Its subcellular location is the cytoplasm. It localises to the nucleus. Non-catalytic component of the proteasome, a multicatalytic proteinase complex which is characterized by its ability to cleave peptides with Arg, Phe, Tyr, Leu, and Glu adjacent to the leaving group at neutral or slightly basic pH. The proteasome has an ATP-dependent proteolytic activity. The sequence is that of Proteasome subunit beta type-1 (PBF1) from Arabidopsis thaliana (Mouse-ear cress).